The chain runs to 60 residues: Large ribosomal subunit protein uL30 (60 aa).

This sequence belongs to the universal ribosomal protein uL30 family. As to quaternary structure, part of the 50S ribosomal subunit.

This Shewanella denitrificans (strain OS217 / ATCC BAA-1090 / DSM 15013) protein is Large ribosomal subunit protein uL30.